We begin with the raw amino-acid sequence, 267 residues long: MPIPRKELPNVGEYVIATVKEIFDYGAYVTLDEYNGLEAYLPWSEVASRWVRNIRDVIRENQKIVVKVIRVNRRRKTVDVSLKKVPENEKRRKMLWWKRYLKASKIVELVAEKIGKSIEDAYREVVWKLEDYYGDPLLGLEEAVIRGPDALREAGIPEEWIEPLYNEALRHVKVKMVKIRGLMFLRSYESDGVERIKKILLSAKEILDKVGDNVKGRIYLLGSPRYVIEIIAPDYKEAEKVLKEILTTTEKLAKELKVEFRFERERK.

One can recognise an S1 motif domain in the interval 12-83 (GEYVIATVKE…RRKTVDVSLK (72 aa)).

It belongs to the eIF-2-alpha family. As to quaternary structure, heterotrimer composed of an alpha, a beta and a gamma chain.

EIF-2 functions in the early steps of protein synthesis by forming a ternary complex with GTP and initiator tRNA. This Staphylothermus marinus (strain ATCC 43588 / DSM 3639 / JCM 9404 / F1) protein is Translation initiation factor 2 subunit alpha.